The chain runs to 612 residues: 1,8-cineole synthase, chloroplastic (612 aa).

The transit peptide at 1 to 52 directs the protein to the chloroplast; it reads MALVSGAPLASRSCLNKSLISSTHELKPLRRTILPTLRWKSATPSINMCLTT. Mg(2+) contacts are provided by Asp363, Asp367, and Asp515. The short motif at 363–367 is the DDXXD motif element; that stretch reads DDIYD.

The protein belongs to the terpene synthase family. Tpsd subfamily. The cofactor is Mg(2+). Mn(2+) is required as a cofactor.

The protein resides in the plastid. It is found in the chloroplast. It catalyses the reaction (2E)-geranyl diphosphate + H2O = 1,8-cineole + diphosphate. The protein operates within terpene metabolism; oleoresin biosynthesis. Its function is as follows. Terpene synthase (TPS) involved in the biosynthesis of monoterpene natural products included in conifer oleoresin secretions and volatile emissions; these compounds contribute to biotic and abiotic stress defense against herbivores and pathogens. Catalyzes the conversion of (2E)-geranyl diphosphate (GPP) to 1,8-cineole. The polypeptide is 1,8-cineole synthase, chloroplastic (Picea engelmannii x Picea glauca (Hybrid white spruce)).